The primary structure comprises 151 residues: Arginine repressor (151 aa).

It belongs to the ArgR family.

The protein resides in the cytoplasm. The protein operates within amino-acid biosynthesis; L-arginine biosynthesis [regulation]. Functionally, regulates arginine biosynthesis genes. The protein is Arginine repressor of Lachnospira eligens (strain ATCC 27750 / DSM 3376 / VPI C15-48 / C15-B4) (Eubacterium eligens).